The sequence spans 169 residues: Peptide deformylase (169 aa).

Residues C91 and H133 each contribute to the Fe cation site. Residue E134 is part of the active site. H137 provides a ligand contact to Fe cation.

Belongs to the polypeptide deformylase family. Requires Fe(2+) as cofactor.

The enzyme catalyses N-terminal N-formyl-L-methionyl-[peptide] + H2O = N-terminal L-methionyl-[peptide] + formate. Its function is as follows. Removes the formyl group from the N-terminal Met of newly synthesized proteins. Requires at least a dipeptide for an efficient rate of reaction. N-terminal L-methionine is a prerequisite for activity but the enzyme has broad specificity at other positions. This Pectobacterium atrosepticum (strain SCRI 1043 / ATCC BAA-672) (Erwinia carotovora subsp. atroseptica) protein is Peptide deformylase.